Here is a 491-residue protein sequence, read N- to C-terminus: 2,3-bisphosphoglycerate-independent phosphoglycerate mutase (491 aa).

Asp11 and Ser61 together coordinate Mn(2+). The active-site Phosphoserine intermediate is Ser61. Residues His118, 147 to 148 (RD), Arg177, Arg183, 247 to 250 (RNDR), and Lys320 contribute to the substrate site. 5 residues coordinate Mn(2+): Asp386, His390, Asp427, His428, and His445.

The protein belongs to the BPG-independent phosphoglycerate mutase family. In terms of assembly, monomer. Mn(2+) is required as a cofactor.

The catalysed reaction is (2R)-2-phosphoglycerate = (2R)-3-phosphoglycerate. The protein operates within carbohydrate degradation; glycolysis; pyruvate from D-glyceraldehyde 3-phosphate: step 3/5. Functionally, catalyzes the interconversion of 2-phosphoglycerate and 3-phosphoglycerate. The protein is 2,3-bisphosphoglycerate-independent phosphoglycerate mutase of Helicobacter pylori (strain ATCC 700392 / 26695) (Campylobacter pylori).